We begin with the raw amino-acid sequence, 125 residues long: U11-myrmicitoxin-Ta1a (125 aa).

Positions 1–21 (MKTVIFILGFAFVAILIPTNG) are cleaved as a signal peptide. A propeptide spanning residues 22–91 (ESMADADAMA…RAMAAAYAAA (70 aa)) is cleaved from the precursor. Cysteines 101 and 124 form a disulfide.

It belongs to the formicidae venom precursor-01 superfamily. Expressed by the venom gland.

Its subcellular location is the secreted. The protein resides in the target cell membrane. In terms of biological role, neurotoxin that causes irreversible rapid flaccid paralysis in blowflies and honeybees upon intrathoracic injection. Causes a quick and irreversible cytolytic effect (at 10 uM) indicating it possibly acts as a pore-forming peptide. Shows only weak effect on aphids (A.pisum) at high doses 24 hours post intrathoracic injection. In vitro, is not cytotoxic on the dipteran S2 Drosophila embryonic cell line. The sequence is that of U11-myrmicitoxin-Ta1a from Tetramorium africanum (Fierce ant).